A 566-amino-acid chain; its full sequence is MPKVEIYKNLFLDKIGKNFTNLEISELLEPFKAEFDGFDENSGKIKIEFNDTNRPDLWSYTGLARQIKTYLFGEIPYYDFFSKKGDFKKCYGEILVDNKMSQIRPFIFGFLAKGLIINDRMLEALIQFQEKLCQSYGQKRRRVAMGMYNSNFIKFPISYVASSPNHKFVPLGMDCELSLLEINEKHPKGLEYSYIVKNFDKYPLLLDNNNNVVSYPPIINSNNIGSLKVGDTELFVEVTGIDFEATLLALSIVACDFYDMGFEILPVKTVFKDPFGLDFEELVCPYYFQEEVEFDVKNVNRLLGNNLTLERICLNLKKMGVSSYSRDFKNYIVPPFYRNDFLHEVDVIEDVMIGEGLASFYPELPKAFTIGRLSALEEFSRNVRNLMMGMGFQEMIYNYMGSRKDFIDRMNINDQNFLKVSNPMTENYEYIRASIIPNLLKSESVSSNFPYPHKIFEVGKVALKNLDAAEGTSTFTNLAFLMSGKEISFNEINSIVATLFYYLNIEIILRESKATFYINGRGADILIEGFNVGSFGEISPYVLNNFGIFIPCSVFEVNINKLVSQS.

The B5 domain maps to 287–362 (YFQEEVEFDV…IGEGLASFYP (76 aa)). The Mg(2+) site is built by aspartate 340, aspartate 346, glutamate 349, and aspartate 350.

Belongs to the phenylalanyl-tRNA synthetase beta subunit family. Type 2 subfamily. In terms of assembly, tetramer of two alpha and two beta subunits. Mg(2+) is required as a cofactor.

It localises to the cytoplasm. It carries out the reaction tRNA(Phe) + L-phenylalanine + ATP = L-phenylalanyl-tRNA(Phe) + AMP + diphosphate + H(+). This chain is Phenylalanine--tRNA ligase beta subunit, found in Borrelia garinii subsp. bavariensis (strain ATCC BAA-2496 / DSM 23469 / PBi) (Borreliella bavariensis).